We begin with the raw amino-acid sequence, 257 residues long: Imidazole glycerol phosphate synthase subunit HisF (257 aa).

Residues aspartate 11 and aspartate 130 contribute to the active site.

This sequence belongs to the HisA/HisF family. Heterodimer of HisH and HisF.

The protein localises to the cytoplasm. The enzyme catalyses 5-[(5-phospho-1-deoxy-D-ribulos-1-ylimino)methylamino]-1-(5-phospho-beta-D-ribosyl)imidazole-4-carboxamide + L-glutamine = D-erythro-1-(imidazol-4-yl)glycerol 3-phosphate + 5-amino-1-(5-phospho-beta-D-ribosyl)imidazole-4-carboxamide + L-glutamate + H(+). It participates in amino-acid biosynthesis; L-histidine biosynthesis; L-histidine from 5-phospho-alpha-D-ribose 1-diphosphate: step 5/9. IGPS catalyzes the conversion of PRFAR and glutamine to IGP, AICAR and glutamate. The HisF subunit catalyzes the cyclization activity that produces IGP and AICAR from PRFAR using the ammonia provided by the HisH subunit. The sequence is that of Imidazole glycerol phosphate synthase subunit HisF from Shewanella loihica (strain ATCC BAA-1088 / PV-4).